Reading from the N-terminus, the 122-residue chain is MDYEFKKNTLEGTYHANFSMGHEAMGRWLVEDVAKNTDLLAEIYKHIALIKNTQDEWTLSGKVMTLVLSDQEVIVQENALFEQSDEEFEEDIHMYDDECISVCGLEDFETMLQSWEAFINRF.

The protein belongs to the UPF0231 family.

This is UPF0231 protein VF_2154 from Aliivibrio fischeri (strain ATCC 700601 / ES114) (Vibrio fischeri).